Reading from the N-terminus, the 113-residue chain is UPF0339 protein MS1092 (113 aa).

2 consecutive repeat copies span residues 11-59 and 62-110.

This sequence belongs to the UPF0339 family. Duplicated subfamily.

This is UPF0339 protein MS1092 from Mannheimia succiniciproducens (strain KCTC 0769BP / MBEL55E).